A 330-amino-acid polypeptide reads, in one-letter code: Inactive serine protease 45 (330 aa).

Positions 1 to 35 (MATSLRLLDAGPGSLRRWIPTCFAALLLLPPRPNL) are cleaved as a signal peptide. Positions 45 to 291 (VCGAPWWSDS…YTGWIKEQVS (247 aa)) constitute a Peptidase S1 domain. 4 disulfide bridges follow: cysteine 75–cysteine 91, cysteine 172–cysteine 249, cysteine 207–cysteine 230, and cysteine 239–cysteine 267. N-linked (GlcNAc...) asparagine glycosylation occurs at asparagine 272.

This sequence belongs to the peptidase S1 family.

It is found in the secreted. The protein is Inactive serine protease 45 (Prss45) of Rattus norvegicus (Rat).